The chain runs to 883 residues: Phosphoenolpyruvate carboxylase (883 aa).

Catalysis depends on residues H138 and K546.

The protein belongs to the PEPCase type 1 family. The cofactor is Mg(2+).

It catalyses the reaction oxaloacetate + phosphate = phosphoenolpyruvate + hydrogencarbonate. In terms of biological role, forms oxaloacetate, a four-carbon dicarboxylic acid source for the tricarboxylic acid cycle. In Shigella flexneri, this protein is Phosphoenolpyruvate carboxylase.